The primary structure comprises 471 residues: Siroheme synthase (471 aa).

The tract at residues 1 to 203 (MEYLPLFADL…GRLEQAEQAL (203 aa)) is precorrin-2 dehydrogenase /sirohydrochlorin ferrochelatase. Residues 22–23 (EV) and 43–44 (RA) contribute to the NAD(+) site. Position 128 is a phosphoserine (Ser-128). The segment at 215–471 (GEVALVGAGP…QKRASVVNLA (257 aa)) is uroporphyrinogen-III C-methyltransferase. Residue Pro-224 participates in S-adenosyl-L-methionine binding. Asp-247 acts as the Proton acceptor in catalysis. The Proton donor role is filled by Lys-269. Residues 300–302 (GGD), Ile-305, 330–331 (TA), Met-382, and Gly-411 contribute to the S-adenosyl-L-methionine site.

This sequence in the N-terminal section; belongs to the precorrin-2 dehydrogenase / sirohydrochlorin ferrochelatase family. It in the C-terminal section; belongs to the precorrin methyltransferase family.

It carries out the reaction uroporphyrinogen III + 2 S-adenosyl-L-methionine = precorrin-2 + 2 S-adenosyl-L-homocysteine + H(+). The enzyme catalyses precorrin-2 + NAD(+) = sirohydrochlorin + NADH + 2 H(+). It catalyses the reaction siroheme + 2 H(+) = sirohydrochlorin + Fe(2+). It functions in the pathway cofactor biosynthesis; adenosylcobalamin biosynthesis; precorrin-2 from uroporphyrinogen III: step 1/1. It participates in cofactor biosynthesis; adenosylcobalamin biosynthesis; sirohydrochlorin from precorrin-2: step 1/1. Its pathway is porphyrin-containing compound metabolism; siroheme biosynthesis; precorrin-2 from uroporphyrinogen III: step 1/1. The protein operates within porphyrin-containing compound metabolism; siroheme biosynthesis; siroheme from sirohydrochlorin: step 1/1. It functions in the pathway porphyrin-containing compound metabolism; siroheme biosynthesis; sirohydrochlorin from precorrin-2: step 1/1. In terms of biological role, multifunctional enzyme that catalyzes the SAM-dependent methylations of uroporphyrinogen III at position C-2 and C-7 to form precorrin-2 via precorrin-1. Then it catalyzes the NAD-dependent ring dehydrogenation of precorrin-2 to yield sirohydrochlorin. Finally, it catalyzes the ferrochelation of sirohydrochlorin to yield siroheme. The sequence is that of Siroheme synthase from Sodalis glossinidius (strain morsitans).